A 337-amino-acid chain; its full sequence is Monoacylglycerol lipase ABHD6 (337 aa).

Over 1–8 (MDLDVVNM) the chain is Extracellular. Residues 9 to 29 (FVIAGGTLAIPILAFVASFLL) form a helical; Signal-anchor for type II membrane protein membrane-spanning segment. Topologically, residues 30–337 (WPSALIRIYY…HNPDNNKKLN (308 aa)) are cytoplasmic. The active-site Nucleophile is the Ser148. Residues Asp278 and His306 each act as charge relay system in the active site.

It belongs to the AB hydrolase superfamily.

It localises to the late endosome membrane. Its subcellular location is the lysosome membrane. It is found in the mitochondrion membrane. The catalysed reaction is Hydrolyzes glycerol monoesters of long-chain fatty acids.. It carries out the reaction 1-octanoylglycerol + H2O = octanoate + glycerol + H(+). The enzyme catalyses 1-decanoylglycerol + H2O = decanoate + glycerol + H(+). It catalyses the reaction 1-dodecanoylglycerol + H2O = dodecanoate + glycerol + H(+). The catalysed reaction is 1-tetradecanoylglycerol + H2O = tetradecanoate + glycerol + H(+). It carries out the reaction 2-hexadecanoylglycerol + H2O = glycerol + hexadecanoate + H(+). The enzyme catalyses 2-(9Z-octadecenoyl)-glycerol + H2O = glycerol + (9Z)-octadecenoate + H(+). It catalyses the reaction 1-(9Z-octadecenoyl)-glycerol + H2O = glycerol + (9Z)-octadecenoate + H(+). The catalysed reaction is 2-(9Z,12Z-octadecadienoyl)-glycerol + H2O = (9Z,12Z)-octadecadienoate + glycerol + H(+). It carries out the reaction 2-(5Z,8Z,11Z,14Z-eicosatetraenoyl)-glycerol + H2O = glycerol + (5Z,8Z,11Z,14Z)-eicosatetraenoate + H(+). The enzyme catalyses 1-(5Z,8Z,11Z,14Z-eicosatetraenoyl)-glycerol + H2O = glycerol + (5Z,8Z,11Z,14Z)-eicosatetraenoate + H(+). It catalyses the reaction 1-(9Z,12Z-octadecadienoyl)-glycerol + H2O = (9Z,12Z)-octadecadienoate + glycerol + H(+). The catalysed reaction is 3-(9Z-octadecenoyl)-sn-glycero-1-phospho-(3'-(9Z-octadecenoyl)-1'-sn-glycerol) + H2O = 3-(9Z-octadecenoyl)-sn-glycero-1-phospho-(1'-sn-glycerol) + (9Z)-octadecenoate + H(+). It carries out the reaction (S,S)-2-(9Z-octadecenoyl)-sn-glycero-1-phospho-(2'-(9Z-octadecenoyl)-1'-sn-glycerol) + H2O = (S,S)-2-(9Z-octadecenoyl)-sn-glycero-1-phospho-(1'-sn-glycerol) + (9Z)-octadecenoate + H(+). The enzyme catalyses (R,R)-2-(9Z-octadecenoyl)-sn-glycero-3-phospho-(2'-(9Z-octadecenoyl)-3'-sn-glycerol) + H2O = (R,R)-2-(9Z-octadecenoyl)-sn-glycero-3-phospho-(3'-sn-glycerol) + (9Z)-octadecenoate + H(+). In terms of biological role, lipase that preferentially hydrolysis medium-chain saturated monoacylglycerols including 2-arachidonoylglycerol. Through 2-arachidonoylglycerol degradation may regulate endocannabinoid signaling pathways. Also has a lysophosphatidyl lipase activity with a preference for lysophosphatidylglycerol among other lysophospholipids. Also able to degrade bis(monoacylglycero)phosphate (BMP) and constitutes the major enzyme for BMP catabolism. BMP, also known as lysobisphosphatidic acid, is enriched in late endosomes and lysosomes and plays a key role in the formation of intraluminal vesicles and in lipid sorting. This chain is Monoacylglycerol lipase ABHD6, found in Rattus norvegicus (Rat).